Consider the following 804-residue polypeptide: MPQSSPSAAATASDMDKNSGSNSSSASSGSSKGQQPPRSASAGPAGESKPKSDGKNSNGSKRYNRKREPSYPKNENFSNQSRRSNSQKSKTFNKMPPQRGGGSSKPFSSSSNGGRRDEVAEAQRAEFSPAQFSGPKKINLNHLLNFTFEPRGQAGHFEGSGHGGWGKRNKWGHKPFNKELFLQANCQFVVSEDQDYAAHFADPDTLVNWDFVEQVRICSHEVPSCPICLYPPTAAKITRCGHIFCWACILHYLSLSEKTWSKCPICYSSVHKKDLKSVVATESRQYAVGDTITMQLMKREKGVLVALPKSKWVNVDHPINLGDEQLSQYSKLLLASKEQVLHRVVLEEKGALEQQLAEEKHTPESCFIEAAIQEVKIREEALSGVAGGGGEVTGVVAALEHLVLMAPLATESAFQPRKGVLEYLSAFDDEAAQVCSLDPPGPLALPLVEEEEAVSEPEACEDAEVADDSLGEGTVGPEMSQEEPITKPGFTQLSSSPCYYFYQAEDGQHMFLHPVNVRCLVREYGSLEQSPEKISATVVEIAGYSMSEDVRQRHRYLSHLPLTCEFSICELALQPPVVSKETLEMFSDDIEKRKRQRQKKAREERRRERRIEMEENKRQGRYPEVHIPLENLQQFPAFNSYTCPSDSALGPTSTEGHGALSLSPLSRSPGSHADFLLTPLSPTASQGSPSFCVGSLEDDSPFLSFAQMLRVGKAKADGWPKTAPKKDDNSLVPPAPVDSDGESDNSDRVPVPSFQNSFSQAIEAAFMKLDTPATSDPLSEDRGGKKRKRQKQKLLFSTSVVHTK.

3 stretches are compositionally biased toward low complexity: residues 1–31 (MPQSSPSAAATASDMDKNSGSNSSSASSGSS), 78–90 (SNQSRRSNSQKSK), and 104–113 (SKPFSSSSNG). Residues 1-134 (MPQSSPSAAA…AEFSPAQFSG (134 aa)) form a disordered region. Residue serine 5 is modified to Phosphoserine. At serine 110 the chain carries Phosphoserine. Over residues 114 to 124 (GRRDEVAEAQR) the composition is skewed to basic and acidic residues. Serine 128 is modified (phosphoserine). The segment at 225–267 (CPICLYPPTAAKITRCGHIFCWACILHYLSLSEKTWSKCPICY) adopts an RING-type zinc-finger fold. Disordered stretches follow at residues 589–611 (DIEKRKRQRQKKAREERRRERRI), 646–665 (DSALGPTSTEGHGALSLSPL), and 715–804 (KADG…VHTK). Residues 601–611 (AREERRRERRI) show a composition bias toward basic and acidic residues. The segment covering 646–655 (DSALGPTSTE) has biased composition (polar residues). Positions 715-729 (KADGWPKTAPKKDDN) are enriched in basic and acidic residues. The span at 795–804 (LFSTSVVHTK) shows a compositional bias: polar residues.

Belongs to the RNF10 family. Interacts with MEOX2.

Its subcellular location is the cytoplasm. It localises to the nucleus. The enzyme catalyses S-ubiquitinyl-[E2 ubiquitin-conjugating enzyme]-L-cysteine + [acceptor protein]-L-lysine = [E2 ubiquitin-conjugating enzyme]-L-cysteine + N(6)-ubiquitinyl-[acceptor protein]-L-lysine.. It participates in protein modification; protein ubiquitination. E3 ubiquitin-protein ligase that catalyzes monoubiquitination of 40S ribosomal proteins RPS2/us5 and RPS3/us3 in response to ribosome stalling. Part of a ribosome quality control that takes place when ribosomes have stalled during translation initiation (iRQC): RNF10 acts by mediating monoubiquitination of RPS2/us5 and RPS3/us3, promoting their degradation by the proteasome. Also promotes ubiquitination of 40S ribosomal proteins in response to ribosome stalling during translation elongation. The action of RNF10 in iRQC is counteracted by USP10. May also act as a transcriptional factor involved in the regulation of MAG (Myelin-associated glycoprotein) expression. Acts as a regulator of Schwann cell differentiation and myelination. This is E3 ubiquitin-protein ligase RNF10 from Mus musculus (Mouse).